The chain runs to 557 residues: Protein PECTIC ARABINOGALACTAN SYNTHESIS-RELATED (557 aa).

The interval 1–54 (MAELRHSSSLGSRSSSSPLRAAGDEDSSSPHVHDHSPNGGDDEDGRPRHPSRDR) is disordered. Over 1 to 79 (MAELRHSSSL…DPRVSPQKNK (79 aa)) the chain is Cytoplasmic. The span at 7–20 (SSSLGSRSSSSPLR) shows a compositional bias: low complexity. Positions 45 to 54 (GRPRHPSRDR) are enriched in basic and acidic residues. Residues 80–100 (ISLLLILILAIASLISVYGII) traverse the membrane as a helical; Signal-anchor for type II membrane protein segment. Topologically, residues 101–557 (NHLNAPYLCK…NPLTPCMCKA (457 aa)) are lumenal. Residues Asn156, Asn188, and Asn324 are each glycosylated (N-linked (GlcNAc...) asparagine). 336-338 (HLR) provides a ligand contact to substrate. Asn375 carries an N-linked (GlcNAc...) asparagine glycan.

This sequence belongs to the glycosyltransferase GT106 family. In terms of tissue distribution, widely expressed with the highest expression in reproductive tissues and roots.

The protein resides in the golgi apparatus membrane. It functions in the pathway glycan metabolism; pectin biosynthesis. Its function is as follows. Glycosyltransferase involved in the biosynthesis of pectic type-II arabinogalactans. The chain is Protein PECTIC ARABINOGALACTAN SYNTHESIS-RELATED from Arabidopsis thaliana (Mouse-ear cress).